The primary structure comprises 278 residues: 3-methyl-2-oxobutanoate hydroxymethyltransferase (278 aa).

Mg(2+) is bound by residues Asp-43 and Asp-82. Residues 43–44 (DS), Asp-82, and Lys-112 each bind 3-methyl-2-oxobutanoate. Mg(2+) is bound at residue Glu-114. Glu-181 acts as the Proton acceptor in catalysis.

This sequence belongs to the PanB family. As to quaternary structure, homodecamer; pentamer of dimers. Requires Mg(2+) as cofactor.

Its subcellular location is the cytoplasm. The enzyme catalyses 3-methyl-2-oxobutanoate + (6R)-5,10-methylene-5,6,7,8-tetrahydrofolate + H2O = 2-dehydropantoate + (6S)-5,6,7,8-tetrahydrofolate. The protein operates within cofactor biosynthesis; (R)-pantothenate biosynthesis; (R)-pantoate from 3-methyl-2-oxobutanoate: step 1/2. Functionally, catalyzes the reversible reaction in which hydroxymethyl group from 5,10-methylenetetrahydrofolate is transferred onto alpha-ketoisovalerate to form ketopantoate. This is 3-methyl-2-oxobutanoate hydroxymethyltransferase from Bacillus cereus (strain G9842).